Here is a 71-residue protein sequence, read N- to C-terminus: UPF0346 protein SZO_05010 (71 aa).

The protein belongs to the UPF0346 family.

The polypeptide is UPF0346 protein SZO_05010 (Streptococcus equi subsp. zooepidemicus (strain H70)).